Consider the following 63-residue polypeptide: Large ribosomal subunit protein uL29 (63 aa).

This sequence belongs to the universal ribosomal protein uL29 family.

The chain is Large ribosomal subunit protein uL29 from Ectopseudomonas mendocina (strain ymp) (Pseudomonas mendocina).